The chain runs to 84 residues: MPRPAYRSRSLRRVKVKTPGGRTVVHYEKRAKGVPKCAVTGQPLGGMNSKVYRFGISTRAPSRPYGGVVSHKVLARAIRYAVRR.

Belongs to the eukaryotic ribosomal protein eL34 family.

The sequence is that of Large ribosomal subunit protein eL34 from Pyrobaculum calidifontis (strain DSM 21063 / JCM 11548 / VA1).